A 377-amino-acid chain; its full sequence is MQCARSSAGDCHSCGWLSLAYSEQINQKQHNLLDLLPKNYAFTQLAPVESQQVKFRNKAKMVVSGSVEKPILGLRKPEGEGVDLCQCPLYPASFEPVFPILKTFIAKAGLVPYNVERRRGELKFILLTESRHNHSMMLRFVLRSEKKLAQLRQALPWLQAQLPQLAVISVNIQPVHMAILEGEQEIVLTEKTFLDEYFNEIPLHIRPKGFFQTNPDVAASLYATAGHWVKELQINRLWDLFCGSGGFGLHCAQKNTELTGIEISPEAIECARLSANELGLEHVEFQALDSTGFALAKESVPELVLVNPPRRGIGETLCDYLNSMKPRFILYSSCNAQTMAKDIQQLSHYRIDRVQLFDMFPHTAHYEVLTLLVLQQS.

Positions 3, 11, 14, and 87 each coordinate [4Fe-4S] cluster. 4 residues coordinate S-adenosyl-L-methionine: Q212, F241, E262, and N307. C334 serves as the catalytic Nucleophile.

This sequence belongs to the class I-like SAM-binding methyltransferase superfamily. RNA M5U methyltransferase family. RlmC subfamily.

The catalysed reaction is uridine(747) in 23S rRNA + S-adenosyl-L-methionine = 5-methyluridine(747) in 23S rRNA + S-adenosyl-L-homocysteine + H(+). Catalyzes the formation of 5-methyl-uridine at position 747 (m5U747) in 23S rRNA. This is 23S rRNA (uracil(747)-C(5))-methyltransferase RlmC from Proteus mirabilis (strain HI4320).